The chain runs to 205 residues: Red chlorophyll catabolite reductase (205 aa).

Substrate-binding residues include glutamate 39 and aspartate 175.

In terms of assembly, homodimer. In terms of processing, the N-terminus is blocked. As to expression, in etiolated and green primary leaves. Low amount in roots.

The protein resides in the plastid. It localises to the chloroplast stroma. It catalyses the reaction primary fluorescent chlorophyll catabolite + 2 oxidized [2Fe-2S]-[ferredoxin] = red chlorophyll catabolite + 2 reduced [2Fe-2S]-[ferredoxin] + 3 H(+). Its pathway is porphyrin-containing compound metabolism; chlorophyll degradation. In terms of biological role, catalyzes the key reaction of chlorophyll catabolism, porphyrin macrocycle cleavage of pheophorbide a (pheide a) to a primary fluorescent catabolite (pFCC). Works in a two-step reaction with pheophorbide a oxygenase (PaO) by reducing the C20/C1 double bond of the intermediate, RCC. This chain is Red chlorophyll catabolite reductase (rccR), found in Hordeum vulgare (Barley).